The chain runs to 165 residues: Small ribosomal subunit protein uS3m (165 aa).

The N-terminal 30 residues, 1–30, are a transit peptide targeting the mitochondrion; that stretch reads MNFLKKLLPQVATEVQQLSRSGFHTSSVCC.

This sequence belongs to the universal ribosomal protein uS3 family. Component of the mitochondrial ribosome small subunit (28S) which comprises a 12S rRNA and about 30 distinct proteins.

The protein resides in the mitochondrion. This Drosophila melanogaster (Fruit fly) protein is Small ribosomal subunit protein uS3m (mRpS24).